Consider the following 57-residue polypeptide: MMKNGFAYKNGKLVNIFCGKEELYNELKAFLVKTFSINVKEVSRPSIYRRTKSKQLE.

This is an uncharacterized protein from Bacillus subtilis (strain 168).